A 98-amino-acid polypeptide reads, in one-letter code: Flagellar hook-basal body complex protein FliE (98 aa).

The segment at 22–56 (KTDNATGAGNTFTQMLDSMSDTQSNAQTSVSNLLT) is disordered. Positions 23–56 (TDNATGAGNTFTQMLDSMSDTQSNAQTSVSNLLT) are enriched in polar residues.

The protein belongs to the FliE family.

The protein resides in the bacterial flagellum basal body. In Listeria innocua serovar 6a (strain ATCC BAA-680 / CLIP 11262), this protein is Flagellar hook-basal body complex protein FliE.